A 680-amino-acid chain; its full sequence is WD repeat-containing protein 48 homolog (680 aa).

WD repeat units follow at residues 26–65 (QHRN…SEKY), 71–110 (HHND…CMST), 113–152 (THRD…ALTA), 164–203 (GSKD…RSMK), 206–245 (GHTE…CVQT), 248–287 (VHKE…NKTL), 290–329 (EEKA…RGTL), and 350–389 (KGGA…KKDT). The interval 594 to 618 (TPSGANANNSLQNSQSDGNSEGSQL) is disordered. Over residues 596 to 609 (SGANANNSLQNSQS) the composition is skewed to low complexity.

Belongs to the WD repeat WDR48 family. Catalytic component of the Usp12-46 deubiquitylase complex consisting of Usp12-46, Wdr20 and Uaf1; regulatory subunit that, together wtih Wdr20, stabilizes Usp12-46. The Usp12-46 deubiquitylase complex associates with arr/arrow; the interaction leads to deubiquitination and stabilization of arr/arrow.

Regulatory component of the Usp12-46 deubiquitylase complex. activates deubiquitination by increasing the catalytic turnover without increasing the affinity of deubiquitinating enzymes for the substrate. The complex deubiquitylates the wg/wingless-signaling receptor arr/arrow, which stabilizes the receptor and increases its concentration at the cell surface; this enhances the sensitivity of cells to wg/wingless-signal stimulation. This increases the amplitude and spatial range of the signaling response to the wg/wingless morphogen gradient, facilitating the precise concentration-dependent regulation of its target genes. Together with Wdr20 and Usp12-46 required for wg/wingless-mediated signaling in the wing imaginal disc and for wg/wingless-dependent regulation of intestinal stem cell proliferation. The chain is WD repeat-containing protein 48 homolog from Drosophila persimilis (Fruit fly).